Consider the following 144-residue polypeptide: MQDLNALLERSLGQLGYELVDMELANRGKLIRLFIDKPEGINIDDCVLVSNHLSNLLAVEHDIDYDRLEISSPGLDRVLKKTSDFVRFAGERAQVKLRMPIEGRKNFLGILRGVDQEYLVLECDGVEQRVPFSNIDKARLSPEF.

The protein belongs to the RimP family.

It localises to the cytoplasm. Functionally, required for maturation of 30S ribosomal subunits. The sequence is that of Ribosome maturation factor RimP from Methylobacillus flagellatus (strain ATCC 51484 / DSM 6875 / VKM B-1610 / KT).